Here is a 323-residue protein sequence, read N- to C-terminus: Acetyl-coenzyme A carboxylase carboxyl transferase subunit alpha (323 aa).

Positions arginine 39–glutamine 293 constitute a CoA carboxyltransferase C-terminal domain.

Belongs to the AccA family. In terms of assembly, acetyl-CoA carboxylase is a heterohexamer composed of biotin carboxyl carrier protein (AccB), biotin carboxylase (AccC) and two subunits each of ACCase subunit alpha (AccA) and ACCase subunit beta (AccD).

It localises to the cytoplasm. The catalysed reaction is N(6)-carboxybiotinyl-L-lysyl-[protein] + acetyl-CoA = N(6)-biotinyl-L-lysyl-[protein] + malonyl-CoA. Its pathway is lipid metabolism; malonyl-CoA biosynthesis; malonyl-CoA from acetyl-CoA: step 1/1. Its function is as follows. Component of the acetyl coenzyme A carboxylase (ACC) complex. First, biotin carboxylase catalyzes the carboxylation of biotin on its carrier protein (BCCP) and then the CO(2) group is transferred by the carboxyltransferase to acetyl-CoA to form malonyl-CoA. This chain is Acetyl-coenzyme A carboxylase carboxyl transferase subunit alpha, found in Burkholderia lata (strain ATCC 17760 / DSM 23089 / LMG 22485 / NCIMB 9086 / R18194 / 383).